The chain runs to 414 residues: 3-phosphoshikimate 1-carboxyvinyltransferase (414 aa).

K20, S21, and R25 together coordinate 3-phosphoshikimate. K20 provides a ligand contact to phosphoenolpyruvate. Phosphoenolpyruvate-binding residues include G88 and R116. 3-phosphoshikimate is bound by residues T157, S158, Q159, S183, D297, and K324. Q159 is a binding site for phosphoenolpyruvate. D297 serves as the catalytic Proton acceptor. Positions 328, 369, and 395 each coordinate phosphoenolpyruvate.

The protein belongs to the EPSP synthase family. In terms of assembly, monomer.

Its subcellular location is the cytoplasm. The catalysed reaction is 3-phosphoshikimate + phosphoenolpyruvate = 5-O-(1-carboxyvinyl)-3-phosphoshikimate + phosphate. It participates in metabolic intermediate biosynthesis; chorismate biosynthesis. Functionally, catalyzes the transfer of the enolpyruvyl moiety of phosphoenolpyruvate (PEP) to the 5-hydroxyl of shikimate-3-phosphate (S3P) to produce enolpyruvyl shikimate-3-phosphate and inorganic phosphate. The protein is 3-phosphoshikimate 1-carboxyvinyltransferase of Caldivirga maquilingensis (strain ATCC 700844 / DSM 13496 / JCM 10307 / IC-167).